The primary structure comprises 108 residues: Holo-[acyl-carrier-protein] synthase (108 aa).

Residues aspartate 9 and glutamate 52 each contribute to the Mg(2+) site.

The protein belongs to the P-Pant transferase superfamily. AcpS family. Mg(2+) is required as a cofactor.

Its subcellular location is the cytoplasm. It carries out the reaction apo-[ACP] + CoA = holo-[ACP] + adenosine 3',5'-bisphosphate + H(+). Its function is as follows. Transfers the 4'-phosphopantetheine moiety from coenzyme A to a Ser of acyl-carrier-protein. In Coprothermobacter proteolyticus (strain ATCC 35245 / DSM 5265 / OCM 4 / BT), this protein is Holo-[acyl-carrier-protein] synthase.